A 941-amino-acid polypeptide reads, in one-letter code: Isoleucine--tRNA ligase (941 aa).

The 'HIGH' region signature appears at 58 to 68 (PYANGDIHIGH). Glu-563 contacts L-isoleucyl-5'-AMP. Residues 604-608 (KMSKS) carry the 'KMSKS' region motif. Residue Lys-607 coordinates ATP. Residues Cys-904, Cys-907, Cys-924, and Cys-927 each coordinate Zn(2+).

This sequence belongs to the class-I aminoacyl-tRNA synthetase family. IleS type 1 subfamily. As to quaternary structure, monomer. The cofactor is Zn(2+).

Its subcellular location is the cytoplasm. The catalysed reaction is tRNA(Ile) + L-isoleucine + ATP = L-isoleucyl-tRNA(Ile) + AMP + diphosphate. In terms of biological role, catalyzes the attachment of isoleucine to tRNA(Ile). As IleRS can inadvertently accommodate and process structurally similar amino acids such as valine, to avoid such errors it has two additional distinct tRNA(Ile)-dependent editing activities. One activity is designated as 'pretransfer' editing and involves the hydrolysis of activated Val-AMP. The other activity is designated 'posttransfer' editing and involves deacylation of mischarged Val-tRNA(Ile). The polypeptide is Isoleucine--tRNA ligase (Halorhodospira halophila (strain DSM 244 / SL1) (Ectothiorhodospira halophila (strain DSM 244 / SL1))).